Reading from the N-terminus, the 254-residue chain is Short-chain dehydrogenase/reductase SDRA (254 aa).

Residue 15–39 (IVTASTQGIGFGITERFGLEGASVV) participates in NADP(+) binding. S146 is a substrate binding site. Residue Y159 is the Proton acceptor of the active site. The Microbody targeting signal signature appears at 252 to 254 (SRL).

It belongs to the short-chain dehydrogenases/reductases (SDR) family.

Its subcellular location is the peroxisome. Involved with IBR3 and IBR10 in the peroxisomal beta-oxidation of indole-3-butyric acid (IBA) to form indole-3-acetic acid (IAA), a biologically active auxin. May be responsible for catalyzing the dehydrogenation step in the conversion of IBA. May be involved in the peroxisomal activation of 2,4-dichlorophenoxybutyric acid (2,4-DB), a precursor of active auxins that inhibit root growth. The chain is Short-chain dehydrogenase/reductase SDRA from Arabidopsis thaliana (Mouse-ear cress).